Here is a 61-residue protein sequence, read N- to C-terminus: Small ribosomal subunit protein uS14 (61 aa).

4 residues coordinate Zn(2+): Cys-24, Cys-27, Cys-40, and Cys-43.

This sequence belongs to the universal ribosomal protein uS14 family. Zinc-binding uS14 subfamily. As to quaternary structure, part of the 30S ribosomal subunit. Contacts proteins S3 and S10. Zn(2+) is required as a cofactor.

In terms of biological role, binds 16S rRNA, required for the assembly of 30S particles and may also be responsible for determining the conformation of the 16S rRNA at the A site. The polypeptide is Small ribosomal subunit protein uS14 (Acetivibrio thermocellus (strain ATCC 27405 / DSM 1237 / JCM 9322 / NBRC 103400 / NCIMB 10682 / NRRL B-4536 / VPI 7372) (Clostridium thermocellum)).